Reading from the N-terminus, the 501-residue chain is ATP synthase subunit alpha (501 aa).

Residue 169-176 (GDRQTGKT) coordinates ATP.

The protein belongs to the ATPase alpha/beta chains family. In terms of assembly, F-type ATPases have 2 components, CF(1) - the catalytic core - and CF(0) - the membrane proton channel. CF(1) has five subunits: alpha(3), beta(3), gamma(1), delta(1), epsilon(1). CF(0) has three main subunits: a(1), b(2) and c(9-12). The alpha and beta chains form an alternating ring which encloses part of the gamma chain. CF(1) is attached to CF(0) by a central stalk formed by the gamma and epsilon chains, while a peripheral stalk is formed by the delta and b chains.

It is found in the cell inner membrane. It catalyses the reaction ATP + H2O + 4 H(+)(in) = ADP + phosphate + 5 H(+)(out). Functionally, produces ATP from ADP in the presence of a proton gradient across the membrane. The alpha chain is a regulatory subunit. The protein is ATP synthase subunit alpha of Campylobacter jejuni subsp. doylei (strain ATCC BAA-1458 / RM4099 / 269.97).